Consider the following 147-residue polypeptide: Large ribosomal subunit protein uL15 (147 aa).

Basic and acidic residues predominate over residues M1–R13. Residues M1 to Q54 form a disordered region. Basic residues predominate over residues K36–H45.

It belongs to the universal ribosomal protein uL15 family. Part of the 50S ribosomal subunit.

Functionally, binds to the 23S rRNA. This chain is Large ribosomal subunit protein uL15, found in Malacoplasma penetrans (strain HF-2) (Mycoplasma penetrans).